The following is a 395-amino-acid chain: Mevalonate kinase (395 aa).

ATP-binding positions include K13, N55, N104, S135, and 140–146 (GAGLGSS). S146 acts as the Proton donor in catalysis. Residues S146 and E193 each coordinate Mg(2+). The active-site Proton acceptor is D204.

Belongs to the GHMP kinase family. Mevalonate kinase subfamily. In terms of assembly, homodimer. It depends on Mg(2+) as a cofactor.

It localises to the cytoplasm. The protein localises to the peroxisome. The enzyme catalyses (R)-mevalonate + ATP = (R)-5-phosphomevalonate + ADP + H(+). The protein operates within isoprenoid biosynthesis; isopentenyl diphosphate biosynthesis via mevalonate pathway; isopentenyl diphosphate from (R)-mevalonate: step 1/3. Farnesyl pyrophosphate and geranyl pyrophosphate inhibit mevalonate kinase activity by binding competitively at the ATP-binding sites. In terms of biological role, catalyzes the phosphorylation of mevalonate to mevalonate 5-phosphate, a key step in isoprenoid and cholesterol biosynthesis. In Mus musculus (Mouse), this protein is Mevalonate kinase.